The chain runs to 362 residues: Class I histocompatibility antigen, Gogo-B*0103 alpha chain (362 aa).

Residues 1–24 (MRVTAPRTLLLLLSAALALTETWA) form the signal peptide. An alpha-1 region spans residues 25–114 (GSHSMRYFDT…ALRYYNQSEA (90 aa)). Residues 25 to 308 (GSHSMRYFDT…EPSSQSTIPI (284 aa)) lie on the Extracellular side of the membrane. N-linked (GlcNAc...) asparagine glycosylation occurs at asparagine 110. Residues 115–206 (GSHTIQWMYG…ENGRETLQRA (92 aa)) are alpha-2. 2 cysteine pairs are disulfide-bonded: cysteine 125/cysteine 188 and cysteine 227/cysteine 283. Residues 207 to 298 (DTPKTHVTHH…GLPKPLTLRW (92 aa)) form an alpha-3 region. Positions 209–295 (PKTHVTHHPI…QHEGLPKPLT (87 aa)) constitute an Ig-like C1-type domain. Residues 299–308 (EPSSQSTIPI) are connecting peptide. Residues 309–332 (VGIVAGLAVLAVVVIGAVVTAVIC) traverse the membrane as a helical segment. Topologically, residues 333–362 (RRKSSGGKGGSYSQAASSDSAQGSDVSLTA) are cytoplasmic. The segment at 335–362 (KSSGGKGGSYSQAASSDSAQGSDVSLTA) is disordered. Positions 343-362 (SYSQAASSDSAQGSDVSLTA) are enriched in low complexity.

This sequence belongs to the MHC class I family. In terms of assembly, heterodimer of an alpha chain and a beta chain (beta-2-microglobulin).

The protein resides in the membrane. Its function is as follows. Involved in the presentation of foreign antigens to the immune system. The protein is Class I histocompatibility antigen, Gogo-B*0103 alpha chain of Gorilla gorilla gorilla (Western lowland gorilla).